The sequence spans 320 residues: SPX domain-containing protein 4 (320 aa).

The SPX domain maps to 1–170 (MKFGKDFRSH…GGLLSLPFTQ (170 aa)). Disordered stretches follow at residues 209–233 (SSSA…VDVE) and 275–320 (CSGA…PRDE). A compositionally biased stretch (polar residues) spans 278–289 (AITSESDSYSDS). Residues 290–299 (QIEDAEDDDK) show a composition bias toward acidic residues. The segment covering 304–313 (REQNTAQNAA) has biased composition (polar residues).

Homodimer. Interacts (via N-terminus) with PHR2 (via C-terminus) in the presence of inositol polyphosphate. Interacts with BHLH6. Post-translationally, degraded under Pi starvation conditions through the ubiquitin/26S proteasome pathway. Widely expressed. Detected in root cells, with the exception of epidermis, and in mesophyll and vascular bundles in leaves.

The protein localises to the membrane. Its subcellular location is the nucleus. The protein resides in the cytoplasm. Its function is as follows. Inositol polyphosphate sensor that associates with transcription factors to regulate Pi starvation responses. The SPX domain provides a basic binding surface for inositol polyphosphate signaling molecules. Interacts with PHR2 to inhibit its translocation to the nucleus and repress its DNA-binding activity, and then negatively regulate Pi signaling. The polypeptide is SPX domain-containing protein 4 (Oryza sativa subsp. japonica (Rice)).